The chain runs to 480 residues: Cysteine--tRNA ligase (480 aa).

Zn(2+) is bound at residue Cys-31. Positions 33–43 (PTVYDSSHIGH) match the 'HIGH' region motif. Zn(2+)-binding residues include Cys-211, His-236, and Glu-240. The 'KMSKS' region signature appears at 269-273 (KMSKS). Lys-272 is a binding site for ATP.

It belongs to the class-I aminoacyl-tRNA synthetase family. Zn(2+) serves as cofactor.

It carries out the reaction tRNA(Cys) + L-cysteine + ATP = L-cysteinyl-tRNA(Cys) + AMP + diphosphate. The protein is Cysteine--tRNA ligase of Encephalitozoon cuniculi (strain GB-M1) (Microsporidian parasite).